Reading from the N-terminus, the 357-residue chain is Peptide chain release factor 1 (357 aa).

N5-methylglutamine is present on Q234.

The protein belongs to the prokaryotic/mitochondrial release factor family. Post-translationally, methylated by PrmC. Methylation increases the termination efficiency of RF1.

Its subcellular location is the cytoplasm. Functionally, peptide chain release factor 1 directs the termination of translation in response to the peptide chain termination codons UAG and UAA. This is Peptide chain release factor 1 from Arthrobacter sp. (strain FB24).